The following is a 251-amino-acid chain: Phosphate import ATP-binding protein PstB 2 (251 aa).

Residues 5-246 form the ABC transporter domain; that stretch reads ISAKDVHLSY…PKKQITSDYL (242 aa). 37–44 is a binding site for ATP; that stretch reads GPSGCGKS.

It belongs to the ABC transporter superfamily. Phosphate importer (TC 3.A.1.7) family. The complex is composed of two ATP-binding proteins (PstB), two transmembrane proteins (PstC and PstA) and a solute-binding protein (PstS).

It localises to the cell membrane. The catalysed reaction is phosphate(out) + ATP + H2O = ADP + 2 phosphate(in) + H(+). Functionally, part of the ABC transporter complex PstSACB involved in phosphate import. Responsible for energy coupling to the transport system. This Lactobacillus acidophilus (strain ATCC 700396 / NCK56 / N2 / NCFM) protein is Phosphate import ATP-binding protein PstB 2.